The chain runs to 131 residues: Probable lactoylglutathione lyase (131 aa).

A VOC domain is found at 2 to 126 (FLLHTMIRVG…DGYKIELIQT (125 aa)). His5 provides a ligand contact to Ni(2+). Position 9 (Arg9) interacts with substrate. Glu56 is a Ni(2+) binding site. Positions 60 and 74 each coordinate substrate. 2 residues coordinate Ni(2+): His74 and Glu122. Glu122 acts as the Proton donor/acceptor in catalysis.

It belongs to the glyoxalase I family. The cofactor is Ni(2+).

The catalysed reaction is (R)-S-lactoylglutathione = methylglyoxal + glutathione. It participates in secondary metabolite metabolism; methylglyoxal degradation; (R)-lactate from methylglyoxal: step 1/2. In terms of biological role, catalyzes the conversion of hemimercaptal, formed from methylglyoxal and glutathione, to S-lactoylglutathione. This Synechocystis sp. (strain ATCC 27184 / PCC 6803 / Kazusa) protein is Probable lactoylglutathione lyase (gloA).